The following is a 169-amino-acid chain: Endoribonuclease YbeY (169 aa).

Zn(2+) is bound by residues His-135, His-139, and His-145.

Belongs to the endoribonuclease YbeY family. Zn(2+) serves as cofactor.

It is found in the cytoplasm. Single strand-specific metallo-endoribonuclease involved in late-stage 70S ribosome quality control and in maturation of the 3' terminus of the 16S rRNA. This Lachnospira eligens (strain ATCC 27750 / DSM 3376 / VPI C15-48 / C15-B4) (Eubacterium eligens) protein is Endoribonuclease YbeY.